A 318-amino-acid chain; its full sequence is tRNA U34 carboxymethyltransferase (318 aa).

Carboxy-S-adenosyl-L-methionine is bound by residues K85, W99, K104, G124, 175–176 (LD), M190, Y194, and R311.

This sequence belongs to the class I-like SAM-binding methyltransferase superfamily. CmoB family. As to quaternary structure, homotetramer.

It catalyses the reaction carboxy-S-adenosyl-L-methionine + 5-hydroxyuridine(34) in tRNA = 5-carboxymethoxyuridine(34) in tRNA + S-adenosyl-L-homocysteine + H(+). In terms of biological role, catalyzes carboxymethyl transfer from carboxy-S-adenosyl-L-methionine (Cx-SAM) to 5-hydroxyuridine (ho5U) to form 5-carboxymethoxyuridine (cmo5U) at position 34 in tRNAs. The protein is tRNA U34 carboxymethyltransferase of Ruthia magnifica subsp. Calyptogena magnifica.